Reading from the N-terminus, the 440-residue chain is uncharacterized protein (440 aa).

The N-terminal stretch at 1-29 (MLRLQMMEGLIVKRTLLLILLLVISVSYA) is a signal peptide.

The protein belongs to the Mj S-layer protein family.

This is an uncharacterized protein from Methanocaldococcus jannaschii (strain ATCC 43067 / DSM 2661 / JAL-1 / JCM 10045 / NBRC 100440) (Methanococcus jannaschii).